The sequence spans 321 residues: Gap junction delta-2 protein (321 aa).

Residues 1–19 (MGEWTILERLLEAAVQQHS) lie on the Cytoplasmic side of the membrane. Residues 20 to 42 (TMIGRILLTVVVIFRILIVAIVG) form a helical membrane-spanning segment. The Extracellular portion of the chain corresponds to 43-75 (ETVYDDEQTMFVCNTLQPGCNQACYDRAFPISH). A helical membrane pass occupies residues 76 to 98 (IRYWVFQIIMVCTPSLCFITYSV). Residues 99–197 (HQSAKQRERR…KLRRQEGISR (99 aa)) lie on the Cytoplasmic side of the membrane. A disordered region spans residues 118–141 (RDPPESIGGPGGTGGGGSGGGKRE). Residues 125–137 (GGPGGTGGGGSGG) show a composition bias toward gly residues. A helical transmembrane segment spans residues 198–220 (FYIIQVVFRNALEIGFLVGQYFL). Residues 221–252 (YGFSVPGLYECNRYPCIKEVECYVSRPTEKTV) lie on the Extracellular side of the membrane. A helical membrane pass occupies residues 253 to 275 (FLVFMFAVSGICVVLNLAELNHL). Over 276–321 (GWRKIKLAVRGAQAKRKSIYEIRNKDLPRVSVPNFGRTQSSDSAYV) the chain is Cytoplasmic.

It belongs to the connexin family. Delta-type subfamily. A connexon is composed of a hexamer of connexins. In terms of tissue distribution, highly expressed in neurons.

The protein resides in the cell membrane. The protein localises to the cell junction. Its subcellular location is the gap junction. Its function is as follows. One gap junction consists of a cluster of closely packed pairs of transmembrane channels, the connexons, through which materials of low MW diffuse from one cell to a neighboring cell. The chain is Gap junction delta-2 protein (GJD2) from Homo sapiens (Human).